Consider the following 292-residue polypeptide: Phosphoribulokinase, chromosomal (292 aa).

An ATP-binding site is contributed by 12 to 20 (GSSGAGTTS).

Belongs to the phosphoribulokinase family. In terms of assembly, homooctamer.

The catalysed reaction is D-ribulose 5-phosphate + ATP = D-ribulose 1,5-bisphosphate + ADP + H(+). Its pathway is carbohydrate biosynthesis; Calvin cycle. This chain is Phosphoribulokinase, chromosomal (cfxP), found in Cupriavidus necator (strain ATCC 17699 / DSM 428 / KCTC 22496 / NCIMB 10442 / H16 / Stanier 337) (Ralstonia eutropha).